Here is a 361-residue protein sequence, read N- to C-terminus: 3-dehydroquinate synthase (361 aa).

It belongs to the archaeal-type DHQ synthase family.

The enzyme catalyses 2-amino-2,3,7-trideoxy-D-lyxo-hept-6-ulosonate + NAD(+) + H2O = 3-dehydroquinate + NH4(+) + NADH + H(+). In terms of biological role, catalyzes the oxidative deamination and cyclization of 2-amino-3,7-dideoxy-D-threo-hept-6-ulosonic acid (ADH) to yield 3-dehydroquinate (DHQ), which is fed into the canonical shikimic pathway of aromatic amino acid biosynthesis. In Methanococcus maripaludis (strain C6 / ATCC BAA-1332), this protein is 3-dehydroquinate synthase.